A 357-amino-acid chain; its full sequence is Uroporphyrinogen decarboxylase (357 aa).

Substrate is bound by residues arginine 27–arginine 31, aspartate 77, tyrosine 154, serine 209, and histidine 330.

The protein belongs to the uroporphyrinogen decarboxylase family. In terms of assembly, homodimer.

The protein localises to the cytoplasm. It carries out the reaction uroporphyrinogen III + 4 H(+) = coproporphyrinogen III + 4 CO2. It functions in the pathway porphyrin-containing compound metabolism; protoporphyrin-IX biosynthesis; coproporphyrinogen-III from 5-aminolevulinate: step 4/4. Catalyzes the decarboxylation of four acetate groups of uroporphyrinogen-III to yield coproporphyrinogen-III. The chain is Uroporphyrinogen decarboxylase from Acinetobacter baumannii (strain ACICU).